A 229-amino-acid polypeptide reads, in one-letter code: HTH-type transcriptional regulator HbdR (229 aa).

One can recognise an HTH tetR-type domain in the interval 20–80 (EERRHQIISA…LTLKNVLDTY (61 aa)). Positions 43 to 62 (TILQIAREAKVSTGLIYQYF) form a DNA-binding region, H-T-H motif.

Homodimer in solution.

With respect to regulation, activity is regulated by the effector molecules 3-hydroxybenzoyl-CoA and benzoyl-CoA, which bind to HbdR, alleviating its repression on the three target promoters and inducing the expression of the hbd genes. Transcriptional regulator that controls the expression of the hbd cluster, which contains three catabolic operons and is responsible for the anaerobic degradation of 3-hydroxybenzoate. HbdR suppresses the activity of the three catabolic promoters (PhbdN, PhbdE and PhbdH) by binding to a conserved palindromic operator box. In addition, it slightly increases activity of its own promoter (PhbdR). The HbdR-mediated repression of hbd genes may play a crucial biological role in maintaining requisite hydroxybenzoate levels in the cell. The sequence is that of HTH-type transcriptional regulator HbdR from Aromatoleum sp. (strain CIB) (Azoarcus sp. (strain CIB)).